The sequence spans 118 residues: Basic phospholipase A2 PA-5 (118 aa).

Disulfide bonds link Cys-11/Cys-71, Cys-27/Cys-117, Cys-29/Cys-45, Cys-44/Cys-98, Cys-51/Cys-91, Cys-60/Cys-84, and Cys-78/Cys-89. 3 residues coordinate Ca(2+): Tyr-28, Gly-30, and Gly-32. His-48 is a catalytic residue. Position 49 (Asp-49) interacts with Ca(2+). Asp-92 is an active-site residue.

This sequence belongs to the phospholipase A2 family. Group I subfamily. D49 sub-subfamily. Ca(2+) serves as cofactor. In terms of tissue distribution, expressed by the venom gland.

The protein resides in the secreted. It carries out the reaction a 1,2-diacyl-sn-glycero-3-phosphocholine + H2O = a 1-acyl-sn-glycero-3-phosphocholine + a fatty acid + H(+). Its function is as follows. PLA2 catalyzes the calcium-dependent hydrolysis of the 2-acyl groups in 3-sn-phosphoglycerides. The chain is Basic phospholipase A2 PA-5 from Pseudechis australis (Mulga snake).